Reading from the N-terminus, the 606-residue chain is NADH-ubiquinone oxidoreductase chain 5 (606 aa).

Transmembrane regions (helical) follow at residues 4–24 (FSSL…MMSL), 43–63 (AFIT…ELII), 87–107 (MMFT…SMWY), 117–137 (FFKY…ANNL), 140–160 (LFIG…WWYG), 171–191 (AVLY…WFLT), 213–233 (LIGL…HPWL), 241–261 (TPVS…FLLI), 272–292 (FIQS…AMCA), 310–330 (LGLM…LHIC), 366–386 (MPFT…MPFL), 413–433 (LIAT…ALLG), 457–477 (LLIG…PTTI), 482–502 (MPYY…ILAL), and 582–602 (GLIK…MMLF).

In terms of assembly, core subunit of respiratory chain NADH dehydrogenase (Complex I) which is composed of 45 different subunits.

It localises to the mitochondrion inner membrane. It carries out the reaction a ubiquinone + NADH + 5 H(+)(in) = a ubiquinol + NAD(+) + 4 H(+)(out). Core subunit of the mitochondrial membrane respiratory chain NADH dehydrogenase (Complex I) which catalyzes electron transfer from NADH through the respiratory chain, using ubiquinone as an electron acceptor. Essential for the catalytic activity and assembly of complex I. This Bos indicus (Zebu) protein is NADH-ubiquinone oxidoreductase chain 5 (MT-ND5).